Reading from the N-terminus, the 432-residue chain is Proline--tRNA ligase (432 aa).

It belongs to the class-II aminoacyl-tRNA synthetase family. ProS type 2 subfamily. In terms of assembly, homodimer.

The protein localises to the cytoplasm. The catalysed reaction is tRNA(Pro) + L-proline + ATP = L-prolyl-tRNA(Pro) + AMP + diphosphate. Functionally, catalyzes the attachment of proline to tRNA(Pro) in a two-step reaction: proline is first activated by ATP to form Pro-AMP and then transferred to the acceptor end of tRNA(Pro). This is Proline--tRNA ligase from Rickettsia bellii (strain OSU 85-389).